We begin with the raw amino-acid sequence, 161 residues long: Phosphopantetheine adenylyltransferase (161 aa).

Residue Ser-11 coordinates substrate. ATP contacts are provided by residues 11–12 (SF) and His-19. Substrate is bound by residues Lys-43, Leu-75, and Arg-89. Residues 90 to 92 (GLR), Glu-100, and 125 to 131 (YSYLSSS) each bind ATP.

This sequence belongs to the bacterial CoaD family. Homohexamer. The cofactor is Mg(2+).

The protein localises to the cytoplasm. It catalyses the reaction (R)-4'-phosphopantetheine + ATP + H(+) = 3'-dephospho-CoA + diphosphate. Its pathway is cofactor biosynthesis; coenzyme A biosynthesis; CoA from (R)-pantothenate: step 4/5. Reversibly transfers an adenylyl group from ATP to 4'-phosphopantetheine, yielding dephospho-CoA (dPCoA) and pyrophosphate. This is Phosphopantetheine adenylyltransferase from Citrifermentans bemidjiense (strain ATCC BAA-1014 / DSM 16622 / JCM 12645 / Bem) (Geobacter bemidjiensis).